The sequence spans 642 residues: Kinesin-like protein KIF12 (642 aa).

Over residues 1–13 the composition is skewed to basic and acidic residues; sequence MEERGSPDGDPAR. A disordered region spans residues 1–25; sequence MEERGSPDGDPARNLEQGPEGSETP. Serine 6 carries the phosphoserine modification. The 336-residue stretch at 25 to 360 folds into the Kinesin motor domain; it reads PIQVVLRVRP…LRYASRAQRI (336 aa). 104-111 contacts ATP; the sequence is GQTGSGKT. Serine 369 is subject to Phosphoserine. The stretch at 376 to 465 forms a coiled coil; it reads QQVENELLRL…QVHDLERRLL (90 aa). Disordered stretches follow at residues 531-561 and 579-642; these read GHISQSVWPPPWAPPPSPGSAKPPRERSQSD and PSAP…LSSC. A compositionally biased stretch (pro residues) spans 538–548; the sequence is WPPPWAPPPSP. The span at 610-642 shows a compositional bias: polar residues; that stretch reads TLTQQINSSLHLSQRQPQPSEDTQSPGQGLSSC. Serine 634 carries the phosphoserine modification.

This sequence belongs to the TRAFAC class myosin-kinesin ATPase superfamily. Kinesin family. Expressed in the liver.

It localises to the cytoplasm. Its subcellular location is the cytoskeleton. This is Kinesin-like protein KIF12 (Kif12) from Mus musculus (Mouse).